The chain runs to 347 residues: GMP reductase (347 aa).

108-131 (ADFEKTVQILALNPALNFVCIDVA) contacts NADP(+). The K(+) site is built by Gly181 and Gly183. Cys186 functions as the Thioimidate intermediate in the catalytic mechanism. 216–239 (IVSDGGCTMPGDVAKAFGGGADFV) is an NADP(+) binding site.

This sequence belongs to the IMPDH/GMPR family. GuaC type 1 subfamily. As to quaternary structure, homotetramer.

It carries out the reaction IMP + NH4(+) + NADP(+) = GMP + NADPH + 2 H(+). Its function is as follows. Catalyzes the irreversible NADPH-dependent deamination of GMP to IMP. It functions in the conversion of nucleobase, nucleoside and nucleotide derivatives of G to A nucleotides, and in maintaining the intracellular balance of A and G nucleotides. This chain is GMP reductase, found in Salmonella typhi.